A 161-amino-acid polypeptide reads, in one-letter code: Transcription elongation factor GreA (161 aa).

Residues 46-71 (AEYTAAKEKQSFLHGKLQELENNLAL) are a coiled coil.

The protein belongs to the GreA/GreB family.

Functionally, necessary for efficient RNA polymerase transcription elongation past template-encoded arresting sites. The arresting sites in DNA have the property of trapping a certain fraction of elongating RNA polymerases that pass through, resulting in locked ternary complexes. Cleavage of the nascent transcript by cleavage factors such as GreA or GreB allows the resumption of elongation from the new 3'terminus. GreA releases sequences of 2 to 3 nucleotides. The sequence is that of Transcription elongation factor GreA from Syntrophus aciditrophicus (strain SB).